The sequence spans 123 residues: uncharacterized protein (123 aa).

Helical transmembrane passes span 1-21 (MVLP…AVGC) and 103-123 (LESS…ILLF).

The protein resides in the membrane. This is an uncharacterized protein from Saccharomyces cerevisiae (strain ATCC 204508 / S288c) (Baker's yeast).